The primary structure comprises 910 residues: E3 ubiquitin-protein ligase MARCHF6 (910 aa).

At M1 the chain carries N-acetylmethionine. An RING-CH-type zinc finger spans residues 1 to 62 (MDTAEEDICR…ELCKHRFAFT (62 aa)). Over 1-91 (MDTAEEDICR…LVTSIGTAIR (91 aa)) the chain is Cytoplasmic. 8 residues coordinate Zn(2+): C9, C12, C26, C28, H36, C39, C52, and C55. Residues 92-112 (YWFHYTLVAFAWLGVVPLTAC) form a helical membrane-spanning segment. The Extracellular portion of the chain corresponds to 113–142 (RIYKCLFTGSVSSLLTLPLDMLSTENLLAD). The chain crosses the membrane as a helical span at residues 143 to 163 (CLQGCFVVTCTLCAFISLVWL). The Cytoplasmic segment spans residues 164 to 283 (REQIVHGGAP…WERMLGLDGS (120 aa)). The tract at residues 185–256 (AAGHHQNEAP…AADANNGAQD (72 aa)) is disordered. Positions 223–248 (DAQDDQAEEEEEDNEEEDDAGVEDAA) are enriched in acidic residues. The chain crosses the membrane as a helical span at residues 284-304 (LVFLEHVFWVVSLNTLFILVF). The Extracellular portion of the chain corresponds to 305 to 336 (AFCPYHIGHFSLVGLGFEEHVQASHFEGLITT). Residues 337–357 (IVGYILLAITLIICHGLATLV) traverse the membrane as a helical segment. The Cytoplasmic portion of the chain corresponds to 358–376 (KFHRSRRLLGVCYIVVKVS). Residues 377 to 397 (LLVVVEIGVFPLICGWWLDIC) traverse the membrane as a helical segment. At 398 to 421 (SLEMFDATLKDRELSFQSAPGTTM) the chain is on the extracellular side. The helical transmembrane segment at 422-442 (FLHWLVGMVYVFYFASFILLL) threads the bilayer. At 443-480 (REVLRPGVLWFLRNLNDPDFNPVQEMIHLPIYRHLRRF) the chain is on the cytoplasmic side. The helical transmembrane segment at 481-501 (ILSVIVFGSIVLLMLWLPIRI) threads the bilayer. The Extracellular segment spans residues 502 to 519 (IKSVLPNFLPYNVMLYSD). A helical transmembrane segment spans residues 520–540 (APVSELSLELLLLQVVLPALL). At 541–632 (EQGHTRQWLK…YRRPLNFPLR (92 aa)) the chain is on the cytoplasmic side. A helical transmembrane segment spans residues 633–653 (IFLLIVFMCITLLIASLICLT). The Extracellular portion of the chain corresponds to 654 to 678 (LPVFAGRWLMSFWTGTAKIHELYTA). Residues 679 to 699 (ACGLYVCWLTIRAVTVMVAWM) traverse the membrane as a helical segment. The Cytoplasmic segment spans residues 700-721 (PQGRRVIFQKVKEWSLMIMKTL). The helical transmembrane segment at 722-742 (IVAVLLAGVVPLLLGLLFELV) threads the bilayer. Over 743-764 (IVAPLRVPLDQTPLFYPWQDWA) the chain is Extracellular. A helical membrane pass occupies residues 765–785 (LGVLHAKIIAAITLMGPQWWL). Over 786 to 815 (KTVIEQVYANGIRNIDLHYIVRKLAAPVIS) the chain is Cytoplasmic. A helical transmembrane segment spans residues 816–836 (VLLLSLCVPYVIASGVVPLLG). Residues 837–848 (VTAEMQNLVHRR) lie on the Extracellular side of the membrane. The chain crosses the membrane as a helical span at residues 849–869 (IYPFLLMVVVLMAILSFQVRQ). Residues 870–910 (FKRLYEHIKNDKYLVGQRLVNYERKSGKQGSSPPPPQSSQE) lie on the Cytoplasmic side of the membrane.

As to quaternary structure, interacts with DIO2. Interacts with SQLE. In terms of processing, auto-ubiquitinated, which results in proteasomal degradation. Deubiquitinated by USP19; protecting MARCHF6 from p97-mediated proteasomal degradation. As to expression, present in brain (at protein level).

Its subcellular location is the endoplasmic reticulum membrane. It catalyses the reaction S-ubiquitinyl-[E2 ubiquitin-conjugating enzyme]-L-cysteine + [acceptor protein]-L-lysine = [E2 ubiquitin-conjugating enzyme]-L-cysteine + N(6)-ubiquitinyl-[acceptor protein]-L-lysine.. The protein operates within protein modification; protein ubiquitination. Functionally, endoplasmic reticulum membrane-associated E3 ubiquitin ligase that plays a critical role in mitigating endoplasmic reticulum stress, the regulation of cholesterol and lipid homeostasis, and ferroptosis. Acts as a pivotal component of both the Ac/N-degron pathway (targeting the N-terminal acetyl group of substrates) and the ER-associated protein degradation-cytosol (ERAD-C) pathway (targeting misfolded substrates). For instance, mediates the degradation of Ac/N-degron-bearing proteins such as the G-protein regulator RGS2 and the lipid droplet protein PLIN2. Suppresses endoplasmic reticulum stress and ferroptosis through cytosolic POMC degradation. Prevents ferroptosis by acting as a NADPH sensor during lipid peroxidation through its C-terminal regulatory region. Facilitates also the degradation of selected endoplasmic reticulum proteins by associating with signal peptide peptidase for the turnover of endogenous tail-anchored proteins. Promotes ubiquitination of DIO2, leading to its degradation. By ubiquitinating and thereby modulating the stability of many proteins of the cholesterol pathway including SQLE, CYP51A1, CYP11A1 and HMGCR, acts as a crucial post-translational regulator of cholesterol synthesis. The chain is E3 ubiquitin-protein ligase MARCHF6 from Homo sapiens (Human).